Consider the following 72-residue polypeptide: Bowman-Birk type proteinase inhibitor 2a (72 aa).

Disulfide bonds link Cys8–Cys61, Cys9–Cys24, Cys12–Cys57, Cys14–Cys22, Cys31–Cys38, Cys35–Cys50, and Cys40–Cys48.

Dimer.

In terms of biological role, inhibits trypsin (IC(50)=0.9 nM) and alpha-chymotrypsin (IC(50)=1.1 nM). The protein is Bowman-Birk type proteinase inhibitor 2a of Lathyrus sativus (White vetchling).